The chain runs to 307 residues: MQAALTAFFMLFFSLLSLLGIAANGFIVLVLGREWLQYGRLLPLDMILISLGVSRFCLQLVGTVYNFYYSAHKVEYSGGLSRQFFHLHWHFLNLATFXFCSWLSVLFCVKXANITHPTFLWLKWRFPGWVPWLLLGSVLISFIITLLLFWVNYPVYQEFLIRKFSGNMTYEWNTRIEMYYLPSLKLVIWSIPCSVFLVSIMLLINSLRRHTWRMQHNGHSLQDPSTQAHTRAXKSLISFLILYVLSFLSLIIDATKFISMQNDFYWPWQTAVYLGVSVHPFILIFSNLKLRSVFWKLLLLARGFWVA.

The Extracellular segment spans residues 1 to 7 (MQAALTA). Residues 8–28 (FFMLFFSLLSLLGIAANGFIV) form a helical membrane-spanning segment. Over 29–40 (LVLGREWLQYGR) the chain is Cytoplasmic. The helical transmembrane segment at 41–61 (LLPLDMILISLGVSRFCLQLV) threads the bilayer. Residues 62–88 (GTVYNFYYSAHKVEYSGGLSRQFFHLH) are Extracellular-facing. A helical membrane pass occupies residues 89–109 (WHFLNLATFXFCSWLSVLFCV). Residues 110-129 (KXANITHPTFLWLKWRFPGW) lie on the Cytoplasmic side of the membrane. Residues 130-150 (VPWLLLGSVLISFIITLLLFW) form a helical membrane-spanning segment. At 151-183 (VNYPVYQEFLIRKFSGNMTYEWNTRIEMYYLPS) the chain is on the extracellular side. The N-linked (GlcNAc...) asparagine glycan is linked to Asn-167. A helical transmembrane segment spans residues 184–204 (LKLVIWSIPCSVFLVSIMLLI). Residues 205–234 (NSLRRHTWRMQHNGHSLQDPSTQAHTRAXK) are Cytoplasmic-facing. The chain crosses the membrane as a helical span at residues 235 to 255 (SLISFLILYVLSFLSLIIDAT). Residues 256–264 (KFISMQNDF) are Extracellular-facing. The helical transmembrane segment at 265-285 (YWPWQTAVYLGVSVHPFILIF) threads the bilayer. At 286-307 (SNLKLRSVFWKLLLLARGFWVA) the chain is on the cytoplasmic side.

The protein belongs to the G-protein coupled receptor T2R family.

Its subcellular location is the membrane. Its function is as follows. Receptor that may play a role in the perception of bitterness and is gustducin-linked. May play a role in sensing the chemical composition of the gastrointestinal content. The activity of this receptor may stimulate alpha gustducin, mediate PLC-beta-2 activation and lead to the gating of TRPM5. The chain is Taste receptor type 2 member 41 (TAS2R41) from Pongo pygmaeus (Bornean orangutan).